A 543-amino-acid chain; its full sequence is Phenylalanine--tRNA ligase beta subunit (543 aa).

Positions 269–344 (FDFRIMRPAR…KSKGIENIEE (76 aa)) constitute a B5 domain. D322, D328, E331, and D332 together coordinate Mg(2+).

Belongs to the phenylalanyl-tRNA synthetase beta subunit family. Type 2 subfamily. Tetramer of two alpha and two beta subunits. Mg(2+) is required as a cofactor.

Its subcellular location is the cytoplasm. It catalyses the reaction tRNA(Phe) + L-phenylalanine + ATP = L-phenylalanyl-tRNA(Phe) + AMP + diphosphate + H(+). This is Phenylalanine--tRNA ligase beta subunit from Thermoplasma acidophilum (strain ATCC 25905 / DSM 1728 / JCM 9062 / NBRC 15155 / AMRC-C165).